Reading from the N-terminus, the 60-residue chain is Large ribosomal subunit protein bL32 (60 aa).

Residues 1-60 (MAVQQNKKSRSARDMRRSHDALSENALSVEKTTGEVHLRHHVSPEGVYRGRKVVDKGADE) are disordered. Basic and acidic residues predominate over residues 11-22 (SARDMRRSHDAL).

The protein belongs to the bacterial ribosomal protein bL32 family.

This is Large ribosomal subunit protein bL32 from Pseudomonas putida (strain ATCC 700007 / DSM 6899 / JCM 31910 / BCRC 17059 / LMG 24140 / F1).